We begin with the raw amino-acid sequence, 160 residues long: MKARVVLQQCLHARLQVKPPDEESEAEWVEVNRGMVIYICFFKGATEDLIPKMVNTLLNVKLCETESGKFTSVLQLPGSVLIVPQATLGGKPKGRGMQYHGNIGKDEGLKLYETFVSLCQSELSSCKNSDILTEVKHGTYGNRQVLKLDTNGPYTHLMEF.

The short motif at 152-153 (GP) is the Gly-transPro motif, allows the protein to recognize chirality of D-amino acids element.

The protein belongs to the DTD family. As to quaternary structure, homodimer.

It is found in the cytoplasm. The catalysed reaction is a D-aminoacyl-tRNA + H2O = a tRNA + a D-alpha-amino acid + H(+). The enzyme catalyses glycyl-tRNA(Ala) + H2O = tRNA(Ala) + glycine + H(+). It catalyses the reaction D-tyrosyl-tRNA(Tyr) + H2O = D-tyrosine + tRNA(Tyr). It carries out the reaction L-alanyl-tRNA(Thr) + H2O = tRNA(Thr) + L-alanine + H(+). Functionally, deacylates mischarged D-aminoacyl-tRNAs. Also deacylates mischarged glycyl-tRNA(Ala), protecting cells against glycine mischarging by AlaRS. Probably acts by rejecting L-amino acids from its binding site rather than specific recognition of D-amino acids. Catalyzes the hydrolysis of D-tyrosyl-tRNA(Tyr), has no activity on correctly charged L-tyrosyl-tRNA(Tyr). By recycling D-aminoacyl-tRNA to D-amino acids and free tRNA molecules, this enzyme counteracts the toxicity associated with the formation of D-aminoacyl-tRNA entities in vivo and helps enforce protein L-homochirality. In contrast to DTD1, deacylates L-Ala mischarged on tRNA(Thr)(G4.U69) by alanine-tRNA ligase AARS. Can deacylate L-Ala due to a relaxed specificity for substrate chirality caused by the trans conformation of the Gly-Pro motif in the active site. Also hydrolyzes correctly charged, achiral, glycyl-tRNA(Gly) in vitro, although in vivo eef1a1a/EF-Tu may protect cognate achiral glycyl-tRNA(Gly) from DTD2-mediated deacetylation. The protein is D-aminoacyl-tRNA deacylase 2 (dtd2) of Danio rerio (Zebrafish).